The following is a 103-amino-acid chain: NADH-quinone oxidoreductase subunit K (103 aa).

3 consecutive transmembrane segments (helical) span residues 7–27 (TEHGLYLAAALFILGLIGVLV), 31–51 (LIFMLLSLEIMLNATGLAFIV), and 65–85 (FMLILTLAAAEAAVALALILL).

The protein belongs to the complex I subunit 4L family. As to quaternary structure, NDH-1 is composed of 14 different subunits. Subunits NuoA, H, J, K, L, M, N constitute the membrane sector of the complex.

The protein resides in the cell inner membrane. The enzyme catalyses a quinone + NADH + 5 H(+)(in) = a quinol + NAD(+) + 4 H(+)(out). NDH-1 shuttles electrons from NADH, via FMN and iron-sulfur (Fe-S) centers, to quinones in the respiratory chain. The immediate electron acceptor for the enzyme in this species is believed to be ubiquinone. Couples the redox reaction to proton translocation (for every two electrons transferred, four hydrogen ions are translocated across the cytoplasmic membrane), and thus conserves the redox energy in a proton gradient. This chain is NADH-quinone oxidoreductase subunit K, found in Nitrosococcus oceani (strain ATCC 19707 / BCRC 17464 / JCM 30415 / NCIMB 11848 / C-107).